Here is a 495-residue protein sequence, read N- to C-terminus: MRTGFDRDLYVRMQSQHINERREQIGGKLYLEMGGKLFDDLHASRVLPGFTPDNKIAMLEQLKDELEILVTINAKDLQRNKTRADLDISYEDDVLRLIDVFREAGFLTEHVVLTQLEDDNYQAMQFIQRLERLGIKVARHRVIPGYPTDARRIVSEEGFGRNEYVETTRNLVVVTAPGPGSGKLATCLSQIYGDHQRGISSGYAKFETFPIWDLPLEHPVNLAYEAATADLDDINVIDPFHLTAYGEKATSYNRDVEVFPLLKTMLEMLSGSSPYQSPTDMGVNMVGSAIADDEVCREAARQEIVRRYFKALVDERRDELDDTVSSRIAIVMSKAGCSVEDRTVVARALELESETGAPASAILLDDGRIVTGKTSALLGCSAAMLLNALKELAGIDPSIDLLSPESIEPIQTLKTEHLGSRNPRLHTDEVLIALSVSAAASDNARRALDQLKNLRGCDVHTTTILGSVDEGIFRNLGVLVTSEPKYQRKALYRKR.

The protein belongs to the UPF0371 family.

This chain is UPF0371 protein CE2832, found in Corynebacterium efficiens (strain DSM 44549 / YS-314 / AJ 12310 / JCM 11189 / NBRC 100395).